Here is a 209-residue protein sequence, read N- to C-terminus: Large ribosomal subunit protein uL3 (209 aa).

The protein belongs to the universal ribosomal protein uL3 family. Part of the 50S ribosomal subunit. Forms a cluster with proteins L14 and L19.

In terms of biological role, one of the primary rRNA binding proteins, it binds directly near the 3'-end of the 23S rRNA, where it nucleates assembly of the 50S subunit. This is Large ribosomal subunit protein uL3 from Brevibacillus brevis (strain 47 / JCM 6285 / NBRC 100599).